Consider the following 702-residue polypeptide: Polyribonucleotide nucleotidyltransferase (702 aa).

Residues D484 and D490 each contribute to the Mg(2+) site. Residues 551–610 (PHIESFKIAVEKIGALIGPGGKTVKSLSDQYRVTINTDSDGTVTVSGRDAQSVFDAKVAV) enclose the KH domain. Positions 620-688 (GRVYQGVVKR…RMGRLNLSYI (69 aa)) constitute an S1 motif domain.

This sequence belongs to the polyribonucleotide nucleotidyltransferase family. The cofactor is Mg(2+).

Its subcellular location is the cytoplasm. It carries out the reaction RNA(n+1) + phosphate = RNA(n) + a ribonucleoside 5'-diphosphate. Its function is as follows. Involved in mRNA degradation. Catalyzes the phosphorolysis of single-stranded polyribonucleotides processively in the 3'- to 5'-direction. The sequence is that of Polyribonucleotide nucleotidyltransferase from Treponema pallidum (strain Nichols).